A 137-amino-acid chain; its full sequence is Small ribosomal subunit protein uS9 (137 aa).

Belongs to the universal ribosomal protein uS9 family.

The polypeptide is Small ribosomal subunit protein uS9 (rps9) (Sulfurisphaera tokodaii (strain DSM 16993 / JCM 10545 / NBRC 100140 / 7) (Sulfolobus tokodaii)).